Reading from the N-terminus, the 130-residue chain is MVESIARVRHIRVTPQKARRVVDMIRGKQAEEALAILKFAPQGASEPIYKLVASAMANARVKADASNSFLAEQDLYIAKAFVDEGTTLKRFQPRAQGRAFRINKRTSHITVVLATPDEADVATTTKKASK.

This sequence belongs to the universal ribosomal protein uL22 family. In terms of assembly, part of the 50S ribosomal subunit.

Functionally, this protein binds specifically to 23S rRNA; its binding is stimulated by other ribosomal proteins, e.g. L4, L17, and L20. It is important during the early stages of 50S assembly. It makes multiple contacts with different domains of the 23S rRNA in the assembled 50S subunit and ribosome. Its function is as follows. The globular domain of the protein is located near the polypeptide exit tunnel on the outside of the subunit, while an extended beta-hairpin is found that lines the wall of the exit tunnel in the center of the 70S ribosome. This is Large ribosomal subunit protein uL22 from Clavibacter michiganensis subsp. michiganensis (strain NCPPB 382).